The sequence spans 532 residues: Light-independent protochlorophyllide reductase subunit B (532 aa).

Asp-36 serves as a coordination point for [4Fe-4S] cluster. Catalysis depends on Asp-282, which acts as the Proton donor. Residue 417–418 (GL) participates in substrate binding.

Belongs to the ChlB/BchB/BchZ family. Protochlorophyllide reductase is composed of three subunits; BchL, BchN and BchB. Forms a heterotetramer of two BchB and two BchN subunits. It depends on [4Fe-4S] cluster as a cofactor.

It catalyses the reaction chlorophyllide a + oxidized 2[4Fe-4S]-[ferredoxin] + 2 ADP + 2 phosphate = protochlorophyllide a + reduced 2[4Fe-4S]-[ferredoxin] + 2 ATP + 2 H2O. It participates in porphyrin-containing compound metabolism; bacteriochlorophyll biosynthesis (light-independent). Functionally, component of the dark-operative protochlorophyllide reductase (DPOR) that uses Mg-ATP and reduced ferredoxin to reduce ring D of protochlorophyllide (Pchlide) to form chlorophyllide a (Chlide). This reaction is light-independent. The NB-protein (BchN-BchB) is the catalytic component of the complex. The chain is Light-independent protochlorophyllide reductase subunit B from Methylobacterium radiotolerans (strain ATCC 27329 / DSM 1819 / JCM 2831 / NBRC 15690 / NCIMB 10815 / 0-1).